We begin with the raw amino-acid sequence, 95 residues long: Putative per-hexamer repeat protein 4 (95 aa).

This is Putative per-hexamer repeat protein 4 (Phxr4) from Mus musculus (Mouse).